A 309-amino-acid polypeptide reads, in one-letter code: DNA replication terminus site-binding protein (309 aa).

The protein belongs to the Tus family.

It localises to the cytoplasm. Its function is as follows. Trans-acting protein required for termination of DNA replication. Binds to DNA replication terminator sequences (terA to terF) to prevent the passage of replication forks. The termination efficiency will be affected by the affinity of this protein for the terminator sequence. The sequence is that of DNA replication terminus site-binding protein from Yersinia enterocolitica serotype O:8 / biotype 1B (strain NCTC 13174 / 8081).